Here is a 297-residue protein sequence, read N- to C-terminus: Ribosomal RNA small subunit methyltransferase A (297 aa).

Residues Asn31, Leu33, Gly58, Glu79, Asp104, and Asn129 each coordinate S-adenosyl-L-methionine.

It belongs to the class I-like SAM-binding methyltransferase superfamily. rRNA adenine N(6)-methyltransferase family. RsmA subfamily.

The protein resides in the cytoplasm. It carries out the reaction adenosine(1518)/adenosine(1519) in 16S rRNA + 4 S-adenosyl-L-methionine = N(6)-dimethyladenosine(1518)/N(6)-dimethyladenosine(1519) in 16S rRNA + 4 S-adenosyl-L-homocysteine + 4 H(+). Specifically dimethylates two adjacent adenosines (A1518 and A1519) in the loop of a conserved hairpin near the 3'-end of 16S rRNA in the 30S particle. May play a critical role in biogenesis of 30S subunits. The chain is Ribosomal RNA small subunit methyltransferase A from Staphylococcus aureus (strain Newman).